A 459-amino-acid polypeptide reads, in one-letter code: Bifunctional protein GlmU (459 aa).

The segment at M1–K229 is pyrophosphorylase. UDP-N-acetyl-alpha-D-glucosamine is bound by residues L11–G14, K25, Q76, G81–T82, Y103–D105, G140, E154, and N227. D105 contacts Mg(2+). Position 227 (N227) interacts with Mg(2+). Residues L230–N250 are linker. The N-acetyltransferase stretch occupies residues G251 to N459. UDP-N-acetyl-alpha-D-glucosamine is bound by residues R333 and K351. The Proton acceptor role is filled by H363. UDP-N-acetyl-alpha-D-glucosamine is bound by residues Y366 and N377. Acetyl-CoA-binding positions include A380, N386–Y387, S405, and A423.

The protein in the N-terminal section; belongs to the N-acetylglucosamine-1-phosphate uridyltransferase family. It in the C-terminal section; belongs to the transferase hexapeptide repeat family. As to quaternary structure, homotrimer. Requires Mg(2+) as cofactor.

It localises to the cytoplasm. It carries out the reaction alpha-D-glucosamine 1-phosphate + acetyl-CoA = N-acetyl-alpha-D-glucosamine 1-phosphate + CoA + H(+). It catalyses the reaction N-acetyl-alpha-D-glucosamine 1-phosphate + UTP + H(+) = UDP-N-acetyl-alpha-D-glucosamine + diphosphate. It participates in nucleotide-sugar biosynthesis; UDP-N-acetyl-alpha-D-glucosamine biosynthesis; N-acetyl-alpha-D-glucosamine 1-phosphate from alpha-D-glucosamine 6-phosphate (route II): step 2/2. The protein operates within nucleotide-sugar biosynthesis; UDP-N-acetyl-alpha-D-glucosamine biosynthesis; UDP-N-acetyl-alpha-D-glucosamine from N-acetyl-alpha-D-glucosamine 1-phosphate: step 1/1. It functions in the pathway bacterial outer membrane biogenesis; LPS lipid A biosynthesis. Its function is as follows. Catalyzes the last two sequential reactions in the de novo biosynthetic pathway for UDP-N-acetylglucosamine (UDP-GlcNAc). The C-terminal domain catalyzes the transfer of acetyl group from acetyl coenzyme A to glucosamine-1-phosphate (GlcN-1-P) to produce N-acetylglucosamine-1-phosphate (GlcNAc-1-P), which is converted into UDP-GlcNAc by the transfer of uridine 5-monophosphate (from uridine 5-triphosphate), a reaction catalyzed by the N-terminal domain. The protein is Bifunctional protein GlmU of Buchnera aphidicola subsp. Acyrthosiphon pisum (strain 5A).